Consider the following 321-residue polypeptide: Necdin (321 aa).

Residues 1–96 (MSEQSKDLSD…QPGPAPPAPA (96 aa)) form a disordered region. Residues 20-35 (SEVHSSPGVSEGVPPS) are compositionally biased toward low complexity. An MAGE domain is found at 98-297 (LVQKAHELMW…QAWPSRYREA (200 aa)).

Binds to the transactivation domains of E2F1 and p53. Binds also SV40 large T antigen and adenovirus E1A. Interacts with nucleobindin 1 and 2. Almost ubiquitous. Detected in fetal brain, lung, liver and kidney; in adult heart, brain, placenta, lung, liver, skeletal muscle, kidney, pancreas, spleen, thymus, prostate, testis, ovary, small intestine and colon. Not detected in peripheral blood leukocytes. In brain, restricted to post-mitotic neurons.

The protein localises to the perikaryon. Its subcellular location is the nucleus. Functionally, growth suppressor that facilitates the entry of the cell into cell cycle arrest. Functionally similar to the retinoblastoma protein it binds to and represses the activity of cell-cycle-promoting proteins such as SV40 large T antigen, adenovirus E1A, and the transcription factor E2F. Necdin also interacts with p53 and works in an additive manner to inhibit cell growth. Also functions as a transcription factor and directly binds to specific guanosine-rich DNA sequences. The chain is Necdin (NDN) from Homo sapiens (Human).